A 239-amino-acid chain; its full sequence is Probable transcriptional regulatory protein lmo0369 (239 aa).

The protein belongs to the TACO1 family. YeeN subfamily.

The protein resides in the cytoplasm. In Listeria monocytogenes serovar 1/2a (strain ATCC BAA-679 / EGD-e), this protein is Probable transcriptional regulatory protein lmo0369.